Reading from the N-terminus, the 930-residue chain is Protein translocase subunit SecA (930 aa).

Residues Gln87, 105–109, and Asp515 each bind ATP; that span reads GEGKT. Residues Cys914, Cys916, Cys925, and His926 each contribute to the Zn(2+) site.

It belongs to the SecA family. In terms of assembly, monomer and homodimer. Part of the essential Sec protein translocation apparatus which comprises SecA, SecYEG and auxiliary proteins SecDF-YajC and YidC. Zn(2+) is required as a cofactor.

It is found in the cell inner membrane. Its subcellular location is the cytoplasm. It catalyses the reaction ATP + H2O + cellular proteinSide 1 = ADP + phosphate + cellular proteinSide 2.. Part of the Sec protein translocase complex. Interacts with the SecYEG preprotein conducting channel. Has a central role in coupling the hydrolysis of ATP to the transfer of proteins into and across the cell membrane, serving both as a receptor for the preprotein-SecB complex and as an ATP-driven molecular motor driving the stepwise translocation of polypeptide chains across the membrane. In Cupriavidus metallidurans (strain ATCC 43123 / DSM 2839 / NBRC 102507 / CH34) (Ralstonia metallidurans), this protein is Protein translocase subunit SecA.